The chain runs to 378 residues: Ret finger protein-like 2 (378 aa).

The segment at 101 to 143 adopts an RING-type; degenerate zinc-finger fold; it reads CPVCSDYLEKPMSLECGCAVCLKCINSLQKEPHGEDLLCCCSS. In terms of domain architecture, B30.2/SPRY spans 168–362; it reads EPKLKKILQM…DQGVLSICPL (195 aa).

In terms of tissue distribution, seems to be expressed in prostate and less abundantly in adult brain, fetal liver, and fetal kidney.

The protein is Ret finger protein-like 2 (RFPL2) of Homo sapiens (Human).